We begin with the raw amino-acid sequence, 162 residues long: Protein-export protein SecB (162 aa).

This sequence belongs to the SecB family. Homotetramer, a dimer of dimers. One homotetramer interacts with 1 SecA dimer.

It is found in the cytoplasm. Functionally, one of the proteins required for the normal export of preproteins out of the cell cytoplasm. It is a molecular chaperone that binds to a subset of precursor proteins, maintaining them in a translocation-competent state. It also specifically binds to its receptor SecA. The polypeptide is Protein-export protein SecB (Bradyrhizobium sp. (strain BTAi1 / ATCC BAA-1182)).